Here is a 1240-residue protein sequence, read N- to C-terminus: Cohesin subunit SA-3 (1240 aa).

The segment covering 1–25 (MPTLWSPSTQHHGSSSGSESSPLQK) has biased composition (low complexity). The interval 1–108 (MPTLWSPSTQ…VSSGNGKNES (108 aa)) is disordered. The span at 97–108 (RIVSSGNGKNES) shows a compositional bias: polar residues. One can recognise an SCD domain in the interval 324–409 (FVHRYRDILP…NRFKDRMVSM (86 aa)). Disordered regions lie at residues 1077 to 1154 (AEAS…PELI) and 1213 to 1240 (DKML…MEDF). Over residues 1115 to 1125 (GPTTPTLTSTA) the composition is skewed to polar residues. The span at 1126 to 1141 (VKRKQSLRTVGKKQKG) shows a compositional bias: basic residues. Ser-1218 carries the phosphoserine modification.

Belongs to the SCC3 family. As to quaternary structure, component of the meiosis-specific cohesin complex, which also contains the SMC1 (SMC1A or SMC1B) and SMC3 heterodimer. Such complex likely contains RAD21, or the meiosis-specific related protein REC8. Interacts with CCDC79/TERB1; recruiting cohesin to telomeres to develop structural rigidity. Phosphorylated. Testis specific.

It localises to the nucleus. It is found in the chromosome. The protein resides in the centromere. Functionally, meiosis specific component of cohesin complex. The cohesin complex is required for the cohesion of sister chromatids after DNA replication. The cohesin complex apparently forms a large proteinaceous ring within which sister chromatids can be trapped. At anaphase, the complex is cleaved and dissociates from chromatin, allowing sister chromatids to segregate. The meiosis-specific cohesin complex probably replaces mitosis specific cohesin complex when it dissociates from chromatin during prophase I. The chain is Cohesin subunit SA-3 (Stag3) from Mus musculus (Mouse).